Reading from the N-terminus, the 306-residue chain is Mitochondrial basic amino acids transporter (306 aa).

6 helical membrane-spanning segments follow: residues 2 to 22 (ALDF…GHPF), 61 to 81 (GLGS…GVQG), 96 to 116 (FLAG…MELA), 153 to 172 (GMVS…FLTY), 187 to 207 (LLVP…WLST), and 255 to 275 (LLRA…VLTY). Solcar repeat units lie at residues 2–86 (ALDF…TLRA), 90–178 (DSPL…LTRA), and 190–275 (PKLL…VLTY). Positions 283 to 306 (VDSEAAPGASTTPAGPALAQPSSL) are disordered. The segment covering 287-306 (AAPGASTTPAGPALAQPSSL) has biased composition (low complexity).

It belongs to the mitochondrial carrier (TC 2.A.29) family.

It localises to the mitochondrion inner membrane. It catalyses the reaction L-lysine(out) + L-arginine(in) = L-lysine(in) + L-arginine(out). The catalysed reaction is L-histidine(out) + L-arginine(in) = L-histidine(in) + L-arginine(out). The enzyme catalyses L-ornithine(in) + L-arginine(out) = L-ornithine(out) + L-arginine(in). It carries out the reaction L-homoarginine(in) + L-arginine(out) = L-homoarginine(out) + L-arginine(in). It catalyses the reaction N(omega)-methyl-L-arginine(in) + L-arginine(out) = N(omega)-methyl-L-arginine(out) + L-arginine(in). The catalysed reaction is L-arginine(in) = L-arginine(out). The enzyme catalyses L-lysine(in) = L-lysine(out). It carries out the reaction L-ornithine(in) = L-ornithine(out). It catalyses the reaction L-histidine(out) = L-histidine(in). In terms of biological role, mitochondrial transporter of arginine, lysine, homoarginine, methylarginine and, to a much lesser extent, ornithine and histidine. Does not transport carnitine nor acylcarnitines. Functions by both counter-exchange and uniport mechanisms. Plays a physiological role in the import of basic amino acids into mitochondria for mitochondrial protein synthesis and amino acid degradation. This is Mitochondrial basic amino acids transporter (Slc25a29) from Rattus norvegicus (Rat).